A 98-amino-acid chain; its full sequence is MIPTYMNIMLAFTISLLGMLIYRSHLMASLLCLEGMMMSLFIMTTLIALNTRSPLTNIMPIILLVFAACEAAVGLALLVSISNTYGLDYIHNLNLLQC.

The next 3 helical transmembrane spans lie at 1–21 (MIPT…GMLI), 29–49 (SLLC…LIAL), and 61–81 (IILL…LVSI).

This sequence belongs to the complex I subunit 4L family. In terms of assembly, core subunit of respiratory chain NADH dehydrogenase (Complex I) which is composed of 45 different subunits.

It is found in the mitochondrion inner membrane. It catalyses the reaction a ubiquinone + NADH + 5 H(+)(in) = a ubiquinol + NAD(+) + 4 H(+)(out). Functionally, core subunit of the mitochondrial membrane respiratory chain NADH dehydrogenase (Complex I) which catalyzes electron transfer from NADH through the respiratory chain, using ubiquinone as an electron acceptor. Part of the enzyme membrane arm which is embedded in the lipid bilayer and involved in proton translocation. The chain is NADH-ubiquinone oxidoreductase chain 4L (MT-ND4L) from Macaca ochreata (Booted macaque).